The sequence spans 541 residues: Phosphoenolpyruvate carboxykinase (ATP) (541 aa).

The substrate site is built by arginine 67, tyrosine 207, and lysine 213. ATP contacts are provided by residues lysine 213, histidine 232, and 248 to 256; that span reads GLSGTGKTT. Mn(2+)-binding residues include lysine 213 and histidine 232. Aspartate 269 contributes to the Mn(2+) binding site. ATP contacts are provided by residues glutamate 297, arginine 333, 449 to 450, and threonine 455; that span reads RI. Arginine 333 provides a ligand contact to substrate.

This sequence belongs to the phosphoenolpyruvate carboxykinase (ATP) family. In terms of assembly, monomer. Mn(2+) serves as cofactor.

It localises to the cytoplasm. It catalyses the reaction oxaloacetate + ATP = phosphoenolpyruvate + ADP + CO2. Its pathway is carbohydrate biosynthesis; gluconeogenesis. Functionally, involved in the gluconeogenesis. Catalyzes the conversion of oxaloacetate (OAA) to phosphoenolpyruvate (PEP) through direct phosphoryl transfer between the nucleoside triphosphate and OAA. The protein is Phosphoenolpyruvate carboxykinase (ATP) of Aliivibrio salmonicida (strain LFI1238) (Vibrio salmonicida (strain LFI1238)).